The primary structure comprises 153 residues: Pheromone-binding protein Gp-9 (153 aa).

The first 19 residues, 1 to 19 (MKTFVLHIFIFALVAFASA), serve as a signal peptide directing secretion. 3 disulfide bridges follow: cysteine 37-cysteine 77, cysteine 73-cysteine 129, and cysteine 118-cysteine 138.

This sequence belongs to the PBP/GOBP family. As to quaternary structure, homodimer.

It is found in the secreted. Colony queen number, a major feature of social organization, is associated with worker genotype for Gp-9. Colonies are headed by either a single reproductive queen (monogyne form) or multiple queens (polygyne form). Differences in worker Gp-9 genotypes between social forms may cause differences in workers' abilities to recognize queens and regulate their numbers. This is Pheromone-binding protein Gp-9 from Solenopsis electra (Fire ant).